The following is a 62-amino-acid chain: UPF0339 protein Atu5359 (62 aa).

Belongs to the UPF0339 family.

The sequence is that of UPF0339 protein Atu5359 from Agrobacterium fabrum (strain C58 / ATCC 33970) (Agrobacterium tumefaciens (strain C58)).